The sequence spans 224 residues: Holliday junction branch migration complex subunit RuvA (224 aa).

The domain I stretch occupies residues 1–67 (MISWLKGEKV…EDGTSLYGFI (67 aa)). Residues 68–146 (EVNQRDLFRE…RFTDNDKTIH (79 aa)) form a domain II region. The interval 147–157 (ENKNDIEANQF) is flexible linker. Residues 157–224 (FSKYIDEIYL…ILMKLSEKST (68 aa)) form a domain III region.

The protein belongs to the RuvA family. In terms of assembly, homotetramer. Forms an RuvA(8)-RuvB(12)-Holliday junction (HJ) complex. HJ DNA is sandwiched between 2 RuvA tetramers; dsDNA enters through RuvA and exits via RuvB. An RuvB hexamer assembles on each DNA strand where it exits the tetramer. Each RuvB hexamer is contacted by two RuvA subunits (via domain III) on 2 adjacent RuvB subunits; this complex drives branch migration. In the full resolvosome a probable DNA-RuvA(4)-RuvB(12)-RuvC(2) complex forms which resolves the HJ.

It localises to the cytoplasm. In terms of biological role, the RuvA-RuvB-RuvC complex processes Holliday junction (HJ) DNA during genetic recombination and DNA repair, while the RuvA-RuvB complex plays an important role in the rescue of blocked DNA replication forks via replication fork reversal (RFR). RuvA specifically binds to HJ cruciform DNA, conferring on it an open structure. The RuvB hexamer acts as an ATP-dependent pump, pulling dsDNA into and through the RuvAB complex. HJ branch migration allows RuvC to scan DNA until it finds its consensus sequence, where it cleaves and resolves the cruciform DNA. The sequence is that of Holliday junction branch migration complex subunit RuvA from Prochlorococcus marinus (strain NATL2A).